The chain runs to 208 residues: HTLV-1 basic zipper factor (208 aa).

The interval 59–93 (RLRWGPVGEEAPPRGETHRDRQRRAEEKRKRKRER) is disordered. A compositionally biased stretch (basic and acidic residues) spans 69 to 86 (APPRGETHRDRQRRAEEK). 3 short sequence motifs (nuclear localization signal) span residues 86–91 (KRKRKR), 115–119 (RRRRA), and 136–140 (RRERK). Residues 125 to 143 (DRARRKLEEEERRERKWRQ) are compositionally biased toward basic and acidic residues. A disordered region spans residues 125–160 (DRARRKLEEEERRERKWRQTEQGAKQRSARKEKMTE).

This sequence belongs to the HTLV-1 HBZ protein family. Interacts with host ATF4; this interaction inhibits viral RNA transcriptional activation by preventing ATF4 binding to Tax-responsive elements. Interacts with host CREB1; this interaction inhibits host CREB1 transcriptional activity. Interacts with host JUN, JUNB and JUND. Interacts with host EP300.

The protein localises to the host nucleus. Its function is as follows. Contributes to the regulation of viral RNA transcription by interacting with host proteins involved in transcriptional activation such as ATF4, or CREB1, and by inhibiting their activity. Additionally, HBZ suppresses host NF-kappa-B-driven transcription mediated by host RELA as well as transcription of some classical NF-kappa-B target genes, including IL8, IL2RA, IRF4, VCAM1, and VEGFA. The chain is HTLV-1 basic zipper factor (HBZ) from Human T-cell leukemia virus 1 (isolate Melanesia mel5 subtype C) (HTLV-1).